Reading from the N-terminus, the 566-residue chain is Proline--tRNA ligase (566 aa).

It belongs to the class-II aminoacyl-tRNA synthetase family. ProS type 1 subfamily. Homodimer.

It localises to the cytoplasm. The catalysed reaction is tRNA(Pro) + L-proline + ATP = L-prolyl-tRNA(Pro) + AMP + diphosphate. Catalyzes the attachment of proline to tRNA(Pro) in a two-step reaction: proline is first activated by ATP to form Pro-AMP and then transferred to the acceptor end of tRNA(Pro). As ProRS can inadvertently accommodate and process non-cognate amino acids such as alanine and cysteine, to avoid such errors it has two additional distinct editing activities against alanine. One activity is designated as 'pretransfer' editing and involves the tRNA(Pro)-independent hydrolysis of activated Ala-AMP. The other activity is designated 'posttransfer' editing and involves deacylation of mischarged Ala-tRNA(Pro). The misacylated Cys-tRNA(Pro) is not edited by ProRS. The protein is Proline--tRNA ligase of Staphylococcus saprophyticus subsp. saprophyticus (strain ATCC 15305 / DSM 20229 / NCIMB 8711 / NCTC 7292 / S-41).